Reading from the N-terminus, the 300-residue chain is MDSRVSILFVCAIAVSCFTSGSASSPVDFSVCNYEFELFRFDLEAKCPPSLYPTPPIEVDGDSLDRLMASQHGNAYMSVLFYASWCPFSRAVRPKFDMLSSMFPQIQHLAVEHSQALPSVFSRYGIHSLPSILMVNQTLNARYHGRKDLISLIEFYEEATGLQPVQYVAEGEPTGLNAGDGNLITWLRKGTSIREIFKQDPFLVLSLLFICLQMAILVFPIAESRMRALWASYVANLNLGRFGEISQLFNRGIHMVDVRRLWLKLSLVKTRNFHERAKNAQAWASSLASVSLGQTSSDQS.

The first 23 residues, 1–23 (MDSRVSILFVCAIAVSCFTSGSA), serve as a signal peptide directing secretion. The 121-residue stretch at 41–161 (FDLEAKCPPS…LIEFYEEATG (121 aa)) folds into the Thioredoxin domain. Asparagine 136 is a glycosylation site (N-linked (GlcNAc...) asparagine). The chain crosses the membrane as a helical span at residues 202 to 222 (FLVLSLLFICLQMAILVFPIA).

The protein resides in the membrane. In Arabidopsis thaliana (Mouse-ear cress), this protein is 5'-adenylylsulfate reductase-like 5 (APRL5).